We begin with the raw amino-acid sequence, 250 residues long: Phosphoribosylaminoimidazole-succinocarboxamide synthase (250 aa).

Belongs to the SAICAR synthetase family.

It carries out the reaction 5-amino-1-(5-phospho-D-ribosyl)imidazole-4-carboxylate + L-aspartate + ATP = (2S)-2-[5-amino-1-(5-phospho-beta-D-ribosyl)imidazole-4-carboxamido]succinate + ADP + phosphate + 2 H(+). Its pathway is purine metabolism; IMP biosynthesis via de novo pathway; 5-amino-1-(5-phospho-D-ribosyl)imidazole-4-carboxamide from 5-amino-1-(5-phospho-D-ribosyl)imidazole-4-carboxylate: step 1/2. In Bifidobacterium longum (strain DJO10A), this protein is Phosphoribosylaminoimidazole-succinocarboxamide synthase.